The following is a 439-amino-acid chain: Serine--tRNA ligase (439 aa).

247–249 (TSE) provides a ligand contact to L-serine. An ATP-binding site is contributed by 278–280 (RSE). Glutamate 301 contributes to the L-serine binding site. Residue 365–368 (EISS) coordinates ATP. Serine 400 is a binding site for L-serine.

Belongs to the class-II aminoacyl-tRNA synthetase family. Type-1 seryl-tRNA synthetase subfamily. Homodimer. The tRNA molecule binds across the dimer.

The protein localises to the cytoplasm. It carries out the reaction tRNA(Ser) + L-serine + ATP = L-seryl-tRNA(Ser) + AMP + diphosphate + H(+). The catalysed reaction is tRNA(Sec) + L-serine + ATP = L-seryl-tRNA(Sec) + AMP + diphosphate + H(+). The protein operates within aminoacyl-tRNA biosynthesis; selenocysteinyl-tRNA(Sec) biosynthesis; L-seryl-tRNA(Sec) from L-serine and tRNA(Sec): step 1/1. Functionally, catalyzes the attachment of serine to tRNA(Ser). Is also able to aminoacylate tRNA(Sec) with serine, to form the misacylated tRNA L-seryl-tRNA(Sec), which will be further converted into selenocysteinyl-tRNA(Sec). The sequence is that of Serine--tRNA ligase from Paracidovorax citrulli (strain AAC00-1) (Acidovorax citrulli).